A 206-amino-acid polypeptide reads, in one-letter code: MRPLTPRQAEILELIKRNIAETGMPPTRAEIATRLGFKSANAAEEHLKALAKKGCIEIMPGTSRGIRLPVEEEDNSESGLPLIGQVAAGEPILAQEHVEQYYQVDPSMFHPAANFLLRVRGDSMKNIGILEGDLLAVHKVQQARNGQVVVARVDDDVTVKRFEKKGNLVYLHAENEDYSPIKVDLSFQSLTIEGLAVGVIRNGDWL.

The segment at residues 28–48 (RAEIATRLGFKSANAAEEHLK) is a DNA-binding region (H-T-H motif). Active-site for autocatalytic cleavage activity residues include S123 and K160.

Belongs to the peptidase S24 family. In terms of assembly, homodimer.

The catalysed reaction is Hydrolysis of Ala-|-Gly bond in repressor LexA.. Functionally, represses a number of genes involved in the response to DNA damage (SOS response), including recA and lexA. In the presence of single-stranded DNA, RecA interacts with LexA causing an autocatalytic cleavage which disrupts the DNA-binding part of LexA, leading to derepression of the SOS regulon and eventually DNA repair. This is LexA repressor from Shewanella sp. (strain ANA-3).